The primary structure comprises 207 residues: Large ribosomal subunit protein uL4 (207 aa).

The interval 45-89 (RQGTHKVKTRSEVRGGGRKPWRQKGTGRARQGSIRSPQWRGGGTV) is disordered. Basic residues predominate over residues 60–71 (GGRKPWRQKGTG).

This sequence belongs to the universal ribosomal protein uL4 family. In terms of assembly, part of the 50S ribosomal subunit.

In terms of biological role, one of the primary rRNA binding proteins, this protein initially binds near the 5'-end of the 23S rRNA. It is important during the early stages of 50S assembly. It makes multiple contacts with different domains of the 23S rRNA in the assembled 50S subunit and ribosome. Functionally, forms part of the polypeptide exit tunnel. This chain is Large ribosomal subunit protein uL4, found in Bacillus mycoides (strain KBAB4) (Bacillus weihenstephanensis).